A 255-amino-acid polypeptide reads, in one-letter code: Small ribosomal subunit protein uS2 (255 aa).

Residues Arg-231 to Ala-255 are disordered. Positions Ala-236 to Ala-255 are enriched in acidic residues.

It belongs to the universal ribosomal protein uS2 family.

The sequence is that of Small ribosomal subunit protein uS2 from Citrifermentans bemidjiense (strain ATCC BAA-1014 / DSM 16622 / JCM 12645 / Bem) (Geobacter bemidjiensis).